A 44-amino-acid polypeptide reads, in one-letter code: U17-ctenitoxin-Co1a (44 aa).

Cystine bridges form between C3/C20, C10/C26, C19/C40, and C28/C38.

In terms of tissue distribution, expressed by the venom gland.

The protein localises to the secreted. In terms of biological role, omega-agatoxins are antagonists of voltage-sensitive calcium channels (Cav). Toxic to mice by intracerebroventricular injection. The chain is U17-ctenitoxin-Co1a from Ctenus ornatus (Brazilian spider).